Here is a 260-residue protein sequence, read N- to C-terminus: GTP cyclohydrolase FolE2 (260 aa).

It belongs to the GTP cyclohydrolase IV family.

It catalyses the reaction GTP + H2O = 7,8-dihydroneopterin 3'-triphosphate + formate + H(+). Its pathway is cofactor biosynthesis; 7,8-dihydroneopterin triphosphate biosynthesis; 7,8-dihydroneopterin triphosphate from GTP: step 1/1. Converts GTP to 7,8-dihydroneopterin triphosphate. The sequence is that of GTP cyclohydrolase FolE2 from Desulfovibrio desulfuricans (strain ATCC 27774 / DSM 6949 / MB).